Here is an 840-residue protein sequence, read N- to C-terminus: Phosphatidylglycerol lysyltransferase (840 aa).

Over 1-8 the chain is Cytoplasmic; that stretch reads MTEELKNR. The chain crosses the membrane as a helical span at residues 9 to 29; that stretch reads LLSILKFVFAAVLFIAVVATL. The Extracellular portion of the chain corresponds to 30-52; it reads YHELAHINFKQTLEAFSKINRWY. Residues 53-73 traverse the membrane as a helical segment; sequence LVGLFICGGSAMILLSLYDLI. Residues 74–89 lie on the Cytoplasmic side of the membrane; sequence LVKGLKLDIPLIRVFK. A helical transmembrane segment spans residues 90–110; sequence ISYIINALNAIVGFGGFIGAG. The Extracellular segment spans residues 111-129; that stretch reads FRAFIYKNYTTDRKKLVHA. The chain crosses the membrane as a helical span at residues 130 to 150; sequence ISIILISMLMGLSLLSILVVL. Over 151–167 the chain is Cytoplasmic; the sequence is HIFDASHIINKVSWVRW. The helical transmembrane segment at 168–188 threads the bilayer; that stretch reads ILYVVALFLPLFIAYTMINPI. Residues 189–193 are Extracellular-facing; that stretch reads DRNNK. Residues 194–216 traverse the membrane as a helical segment; sequence YLGVYCTLVSSFEWLAAATVLYL. Over 217-229 the chain is Cytoplasmic; that stretch reads STVIVDINIAFTT. A helical membrane pass occupies residues 230–250; the sequence is VIGIFIIAALSGLVSFIPGGF. The Extracellular segment spans residues 251 to 271; the sequence is GAFDLVVLLGLKSLGVPEEKV. A helical transmembrane segment spans residues 272-292; it reads LLALLLYRFAYYFVPVIIALI. The Cytoplasmic portion of the chain corresponds to 293-335; it reads LSTFEFGSSARKYFEESKYFVPARDVTSFLFSYQKDIIAKIPS. The chain crosses the membrane as a helical span at residues 336 to 356; the sequence is FALATLVLITSFVFFINNITI. Residues 357–366 lie on the Extracellular side of the membrane; it reads VYDGLYDDHH. The helical transmembrane segment at 367 to 387 threads the bilayer; the sequence is FAYYIMLSVHTSACLLLLINV. The Cytoplasmic segment spans residues 388 to 394; sequence RGVFKQS. Helical transmembrane passes span 395–415 and 416–436; these read RRAI…TIYT and YASL…ILAY. The Cytoplasmic segment spans residues 437–450; sequence RRSKVMKRPFRLKR. A helical transmembrane segment spans residues 451–471; sequence LIFTIILSMLVLYVNHFIISE. Topologically, residues 472–490 are extracellular; sequence TLYALDIYHIEMDTSLLKY. The helical transmembrane segment at 491-511 threads the bilayer; sequence YFWLTILVVVILVGIVAWLLG. Residues 512-840 are Cytoplasmic-facing; that stretch reads SRYTRPHQLE…LKVMRVIRHK (329 aa).

It belongs to the LPG synthase family.

The protein resides in the cell membrane. The enzyme catalyses L-lysyl-tRNA(Lys) + a 1,2-diacyl-sn-glycero-3-phospho-(1'-sn-glycerol) = a 1,2-diacyl-sn-glycero-3-phospho-1'-(3'-O-L-lysyl)-sn-glycerol + tRNA(Lys). Its function is as follows. Catalyzes the transfer of a lysyl group from L-lysyl-tRNA(Lys) to membrane-bound phosphatidylglycerol (PG), which produces lysylphosphatidylglycerol (LPG), a major component of the bacterial membrane with a positive net charge. LPG synthesis contributes to bacterial virulence as it is involved in the resistance mechanism against cationic antimicrobial peptides (CAMP) produces by the host's immune system (defensins, cathelicidins) and by the competing microorganisms (bacteriocins). In fact, the modification of anionic phosphatidylglycerol with positively charged L-lysine results in repulsion of the peptides. This is Phosphatidylglycerol lysyltransferase (mprF) from Staphylococcus haemolyticus (strain JCSC1435).